The sequence spans 185 residues: A-type ATP synthase subunit E (185 aa).

This sequence belongs to the V-ATPase E subunit family. Has multiple subunits with at least A(3), B(3), C, D, E, F, H, I and proteolipid K(x).

The protein resides in the cell membrane. Functionally, component of the A-type ATP synthase that produces ATP from ADP in the presence of a proton gradient across the membrane. The chain is A-type ATP synthase subunit E from Thermoplasma acidophilum (strain ATCC 25905 / DSM 1728 / JCM 9062 / NBRC 15155 / AMRC-C165).